Reading from the N-terminus, the 1598-residue chain is Transposon Ty2-LR2 Gag-Pol polyprotein (1598 aa).

3 stretches are compositionally biased toward polar residues: residues 1–11, 19–39, and 49–60; these read MESQQLHQNPH, ASVT…SASN, and KVNSQEETTPGT. Disordered regions lie at residues 1–88 and 359–449; these read MESQ…YQQH and QHSE…SNDE. Positions 295-397 are RNA-binding; that stretch reads ENNINVSDRL…SSKPRAAKAH (103 aa). Residues 369–381 are compositionally biased toward low complexity; the sequence is TSPNTTNTKVTTR. Polar residues-rich tracts occupy residues 399 to 408 and 415 to 435; these read IATSSKFSRV and ESTV…GQQQ. Aspartate 457 functions as the For protease activity; shared with dimeric partner in the catalytic mechanism. The tract at residues 579–636 is integrase-type zinc finger-like; the sequence is NVNKSKSVNKYPYPLIHRMLGHANFRSIQKSLKKNAVTYLKESDIEWSNASTYQCPDC. The Integrase catalytic domain maps to 656 to 831; that stretch reads ESYEPFQYLH…AGLDITTILP (176 aa). Mg(2+)-binding residues include aspartate 667 and aspartate 732. Composition is skewed to polar residues over residues 915 to 927, 1009 to 1034, and 1065 to 1082; these read SFIE…QSYD, ESDT…STNE, and QRNS…STPS. Disordered stretches follow at residues 915–934, 1004–1034, 1059–1135, 1146–1165, and 1170–1205; these read SFIE…ESDH, MGGT…STNE, TEEP…KSSK, LPLP…VSKD, and HSRQ…TEIE. Residues 1151–1165 are compositionally biased toward basic and acidic residues; it reads LTHKSPTDTSDVSKD. The Bipartite nuclear localization signal motif lies at 1193–1227; sequence KKRSLEDNETEIEVSRDTWNNKNMRSLEPPRSKKR. Positions 1353 to 1491 constitute a Reverse transcriptase Ty1/copia-type domain; the sequence is NDYYITQLDI…DILGLEIKYQ (139 aa). 3 residues coordinate Mg(2+): aspartate 1361, aspartate 1442, and aspartate 1443.

As to quaternary structure, the capsid protein forms a homotrimer, from which the VLPs are assembled. The protease is a homodimer, whose active site consists of two apposed aspartic acid residues. In terms of processing, initially, virus-like particles (VLPs) are composed of the structural unprocessed proteins Gag and Gag-Pol, and also contain the host initiator methionine tRNA (tRNA(i)-Met) which serves as a primer for minus-strand DNA synthesis, and a dimer of genomic Ty RNA. Processing of the polyproteins occurs within the particle and proceeds by an ordered pathway, called maturation. First, the protease (PR) is released by autocatalytic cleavage of the Gag-Pol polyprotein, and this cleavage is a prerequisite for subsequent processing at the remaining sites to release the mature structural and catalytic proteins. Maturation takes place prior to the RT reaction and is required to produce transposition-competent VLPs.

The protein resides in the cytoplasm. It localises to the nucleus. It carries out the reaction DNA(n) + a 2'-deoxyribonucleoside 5'-triphosphate = DNA(n+1) + diphosphate. The catalysed reaction is Endonucleolytic cleavage to 5'-phosphomonoester.. In terms of biological role, capsid protein (CA) is the structural component of the virus-like particle (VLP), forming the shell that encapsulates the retrotransposons dimeric RNA genome. The particles are assembled from trimer-clustered units and there are holes in the capsid shells that allow for the diffusion of macromolecules. CA also has nucleocapsid-like chaperone activity, promoting primer tRNA(i)-Met annealing to the multipartite primer-binding site (PBS), dimerization of Ty2 RNA and initiation of reverse transcription. Functionally, the aspartyl protease (PR) mediates the proteolytic cleavages of the Gag and Gag-Pol polyproteins after assembly of the VLP. Its function is as follows. Reverse transcriptase/ribonuclease H (RT) is a multifunctional enzyme that catalyzes the conversion of the retro-elements RNA genome into dsDNA within the VLP. The enzyme displays a DNA polymerase activity that can copy either DNA or RNA templates, and a ribonuclease H (RNase H) activity that cleaves the RNA strand of RNA-DNA heteroduplexes during plus-strand synthesis and hydrolyzes RNA primers. The conversion leads to a linear dsDNA copy of the retrotransposon that includes long terminal repeats (LTRs) at both ends. Integrase (IN) targets the VLP to the nucleus, where a subparticle preintegration complex (PIC) containing at least integrase and the newly synthesized dsDNA copy of the retrotransposon must transit the nuclear membrane. Once in the nucleus, integrase performs the integration of the dsDNA into the host genome. The chain is Transposon Ty2-LR2 Gag-Pol polyprotein (TY2B-LR2) from Saccharomyces cerevisiae (strain ATCC 204508 / S288c) (Baker's yeast).